A 481-amino-acid chain; its full sequence is MATVLSSTGKISQVIGAVVDVTFDGELPAILSALETDNNGNRLVLEVAQHLGENTVRTIAMDSTDGLTRGQPVTNTGAQISVPVGPKTLGRIMNVIGEPIDERGPVGAEQTAPIHAKAPEFIEQSTEAAILVTGIKVIDLLAPYARGGKIGLFGGAGVGKTVLIQELINNIAKGHGGVSVFAGVGERTREGNDLYHEFLDAGVIAKDADGNPTPDGSKVALVFGQMNEPPGARARVALSGLTMAEYFRDQEGQDVLFFVDNIFRFTQAGSEVSALLGRIPSAVGYQPTLATDMGQLQERITSTTKGSITSVQAIYVPADDLTDPAPATSFAHLDATTTLNRAISELGIYPAVDPLDSTSRVLTPAVVGQEHYETARRVQETLQKYKSLQDIIAILGMDELSEEDKLTVARARKIQRFLSQPFHVAEVFTGIPGKFVQVEDTVRSFKAVVDGEYDHLPEAAFYMVGGIDEAVEKAKKLAAEA.

Position 154–161 (154–161 (GGAGVGKT)) interacts with ATP.

Belongs to the ATPase alpha/beta chains family. F-type ATPases have 2 components, CF(1) - the catalytic core - and CF(0) - the membrane proton channel. CF(1) has five subunits: alpha(3), beta(3), gamma(1), delta(1), epsilon(1). CF(0) has three main subunits: a(1), b(2) and c(9-12). The alpha and beta chains form an alternating ring which encloses part of the gamma chain. CF(1) is attached to CF(0) by a central stalk formed by the gamma and epsilon chains, while a peripheral stalk is formed by the delta and b chains.

It localises to the cell inner membrane. It catalyses the reaction ATP + H2O + 4 H(+)(in) = ADP + phosphate + 5 H(+)(out). In terms of biological role, produces ATP from ADP in the presence of a proton gradient across the membrane. The catalytic sites are hosted primarily by the beta subunits. This Novosphingobium aromaticivorans (strain ATCC 700278 / DSM 12444 / CCUG 56034 / CIP 105152 / NBRC 16084 / F199) protein is ATP synthase subunit beta.